We begin with the raw amino-acid sequence, 630 residues long: Probable potassium transport system protein Kup (630 aa).

12 helical membrane passes run 17-37 (LAIA…LYSL), 51-71 (PSAI…VVGI), 105-125 (ITGL…GDAV), 144-164 (PQLS…LFWI), 175-195 (LFGP…IYHI), 218-238 (VLLA…AEAL), 255-275 (YVLV…LLLL), 283-303 (PFFL…STVA), 344-364 (IYVP…VIGF), 374-394 (YGIA…VVMV), 402-422 (LLVA…FGAN), and 428-448 (QGGW…MTWY).

The protein belongs to the HAK/KUP transporter (TC 2.A.72) family.

It localises to the cell inner membrane. It catalyses the reaction K(+)(in) + H(+)(in) = K(+)(out) + H(+)(out). In terms of biological role, transport of potassium into the cell. Likely operates as a K(+):H(+) symporter. The sequence is that of Probable potassium transport system protein Kup from Burkholderia mallei (strain NCTC 10247).